Here is a 474-residue protein sequence, read N- to C-terminus: PRAME family member 10 (474 aa).

The stretch at 97–124 (RWKLQVLDLRDVDENFWTIWSGARVLSC) is one LRR 1; degenerate repeat. An LRR 2; degenerate repeat occupies 179–203 (HLCCSKVQNYSMPTSSFRNLLERIY). An LRR 3; degenerate repeat occupies 204–230 (PDSIQELEVWKKCSLNKTGKFAPYLSQ). Residues 231–265 (MSNLRELFLAFGYERELYVSVQWPCIPDLDSPFLC) form an LRR 4; degenerate repeat. LRR repeat units lie at residues 266–291 (LYYPQMLYIKKISNIKEHLEHLLRYL), 292–323 (KNPLGAFIFSDAYLTDRDMECLSQYPSLSQLK), 324–342 (ELRLIHILMWTTNLEPLGV), 348–375 (AATLKTLVLKDCRIQDPQLRVLLPALSH), and 376–400 (CSQLTTFNFHGNETSMNALKDLLRH).

It belongs to the PRAME family.

This chain is PRAME family member 10, found in Homo sapiens (Human).